We begin with the raw amino-acid sequence, 464 residues long: D-2-hydroxyglutarate dehydrogenase (464 aa).

Positions 37 to 216 (FAPAPSAIVF…VEATMRLERQ (180 aa)) constitute an FAD-binding PCMH-type domain. (R)-2-hydroxyglutarate-binding residues include Arg-325, Ser-329, and Lys-339. (R)-malate-binding residues include Arg-325, Ser-329, and Lys-339. Zn(2+)-binding residues include His-374 and His-381. Asn-383 contacts (R)-2-hydroxyglutarate. Glu-420 serves as a coordination point for Zn(2+). His-421 provides a ligand contact to (R)-2-hydroxyglutarate. His-421 is a binding site for (R)-malate.

The protein belongs to the FAD-binding oxidoreductase/transferase type 4 family. Homodimer. The cofactor is FAD.

It carries out the reaction (R)-2-hydroxyglutarate + A = 2-oxoglutarate + AH2. It catalyses the reaction (R)-malate + A = oxaloacetate + AH2. Activated by Zn(2+) ions at low concentrations (10 uM) and inhibited by Zn(2+), Fe(2+) and Ni(2+) at high concentrations (10 mM). Functionally, catalyzes the dehydrogenation of (R)-2-hydroxyglutarate (D-2-hydroxyglutarate or D-2-HG) to 2-oxoglutarate and of (R)-malate (D-malate) to oxaloacetate. Is functionally tied to L-serine biosynthesis, via its coupling with the D-3-phosphoglycerate dehydrogenase SerA, encoded by the adjacent gene in the locus. Is required for the utilization of D-2-hydroxyglutarate as well as D-malate as the sole carbon source for growth of P.stutzeri. Active in vitro with artificial electron acceptors such as 2,6-dichlorophenolindophenol (DCPIP) and appears to couple with electron transfer flavoprotein (ETF) for efficient oxidation of both D-2-hydroxyglutarate and D-malate in vivo. Cannot catalyze the oxidation of L-2-hydroxyglutarate, D-lactate, D-tartrate, D-2-hydroxybutanoate, D-mandelate, D-glycerate and D-phenyllactate. In Stutzerimonas stutzeri (strain A1501) (Pseudomonas stutzeri), this protein is D-2-hydroxyglutarate dehydrogenase.